The primary structure comprises 97 residues: U-scoloptoxin(10)-Ssd2a (97 aa).

The N-terminal stretch at 1–23 (MNKSMLIFFTILFLTYIIEEKEA) is a signal peptide.

Post-translationally, contains 3 disulfide bonds. Expressed by the venom gland.

The protein resides in the secreted. This chain is U-scoloptoxin(10)-Ssd2a, found in Scolopendra dehaani (Thai centipede).